The primary structure comprises 449 residues: Cyclin-B1-1 (449 aa).

Disordered regions lie at residues 1–34 (MATRSQNVAAAPQPPQNRGNVAALGKQKAVVAGR) and 90–143 (AVAP…SVRK). Low complexity-rich tracts occupy residues 90–102 (AVAPAAVARPAQR) and 121–134 (EISSDSDQSMRQQS).

Belongs to the cyclin family. Cyclin AB subfamily.

This Oryza sativa subsp. japonica (Rice) protein is Cyclin-B1-1 (CYCB1-1).